The sequence spans 4467 residues: Protocadherin-like protein (4467 aa).

The N-terminal stretch at 1-22 (MRGINAIVGFLLCFCLLHRINT) is a signal peptide. Cadherin domains follow at residues 23–128 (AVQF…SPTF), 129–238 (PQHL…SPVF), 239–350 (EKKS…VPVF), 351–455 (QEES…TPVF), 459–566 (NPQQ…NPDF), 567–664 (SKVV…PPTF), 665–764 (KNAP…PPTF), 765–884 (SRSS…SPEF), 885–994 (SQTS…PPLF), 1092–1197 (EAQP…QPRF), 1290–1395 (SRTV…SPKF), 1396–1499 (SADS…PPKF), 1495–1597 (GPPK…EPQF), 1601–1701 (SNGF…QPVR), 1793–1891 (TMID…KPQF), 1892–1992 (SESA…YPKF), 1993–2100 (EPNL…KPQF), 2101–2202 (LESD…RPVF), 2203–2312 (TDCP…FPFF), 2313–2423 (LTRT…PPAF), 2425–2529 (PSAV…TPTF), 2530–2639 (KLEE…PPIF), 2640–2746 (PKPS…IPKF), 2747–2849 (DNLI…SPYF), 2850–2954 (PNPP…APVF), 2955–3062 (NPRE…PPVF), 3063–3170 (VPAE…GPWF), and 3173–3288 (RYYE…EPFD). Topologically, residues 23-4258 (AVQFKQEILE…RPSSRWANPA (4236 aa)) are extracellular. The 39-residue stretch at 3551–3589 (PDINCTTGTPCLHGGTCHNAVPKGIICECGRDYLGPECQ) folds into the EGF-like 1 domain. 7 disulfide bridges follow: cysteine 3555/cysteine 3567, cysteine 3561/cysteine 3577, cysteine 3579/cysteine 3588, cysteine 3762/cysteine 3788, cysteine 3794/cysteine 3803, cysteine 3797/cysteine 3812, and cysteine 3814/cysteine 3823. The Laminin G-like 1 domain maps to 3590–3788 (STTRTFRGNS…LKEVNTELGC (199 aa)). The EGF-like 2 domain maps to 3790-3824 (LNNQCPNCNGRGYCEPFWNYAICVCDLGFGGANCD). The Laminin G-like 2 domain occupies 3842-4096 (VKQVKRKRRE…KVIISSSGGS (255 aa)). Positions 4089-4118 (IISSSGGSVSGGSGGASGGSGGASGSGGSV) are disordered. A compositionally biased stretch (gly residues) spans 4096 to 4118 (SVSGGSGGASGGSGGASGSGGSV). Residues 4206–4238 (PCGSNFCRHGGTCVSADPPYCLCPVGWSGPVCE) enclose the EGF-like 3 domain. Cystine bridges form between cysteine 4207–cysteine 4218, cysteine 4212–cysteine 4226, and cysteine 4228–cysteine 4237. The helical transmembrane segment at 4259-4279 (VIACILVILLAILVIIGAVLL) threads the bilayer. The Cytoplasmic segment spans residues 4280–4467 (KRRPQPAVVA…NLNRIFNEDE (188 aa)). The segment at 4424–4445 (DVDDLSELGDSDEEPDEEEEQE) is disordered.

Component of the acid-insoluble organic matrix of the aragonitic skeleton (at protein level).

The protein resides in the membrane. The polypeptide is Protocadherin-like protein (Acropora millepora (Staghorn coral)).